The following is a 1058-amino-acid chain: Structural maintenance of chromosomes protein 6A (1058 aa).

Positions 23-1049 constitute a Zinc-hook domain; it reads ILRIRLENFM…SMVKSHEKIK (1027 aa). 50–57 serves as a coordination point for ATP; it reads GQNGSGKS. A coiled-coil region spans residues 136–449; it reads KISSRKEELR…NDLKKHQTNK (314 aa). A flexible hinge region spans residues 450–633; that stretch reads VTAFGGDKVI…PPRPRRPTRL (184 aa). Residues 634–927 adopt a coiled-coil conformation; that stretch reads CASFDDQIKD…RNKDLLKREL (294 aa).

The protein belongs to the SMC family. SMC6 subfamily. As to quaternary structure, forms a heterodimer with SMC5. The SMC5-SMC6 complex is composed of the SMC5 and SMC6 heterodimer attached via their hinge domain and from the non-SMC subunit NSE4A or NSE4B. Expressed in seedlings, rosette leaves and floral buds.

The protein localises to the nucleus. Its subcellular location is the chromosome. Functionally, core component of the SMC5-SMC6 complex that promotes sister chromatid alignment after DNA damage and facilitates double-stranded DNA breaks (DSBs) repair via homologous recombination between sister chromatids. The sequence is that of Structural maintenance of chromosomes protein 6A (SMC6A) from Arabidopsis thaliana (Mouse-ear cress).